A 567-amino-acid polypeptide reads, in one-letter code: Probable E3 ubiquitin-protein ligase ARI8 (567 aa).

Residues 1-27 (MEADDDFYSGTENYSDYADSDEDDADG) are disordered. The span at 18 to 27 (ADSDEDDADG) shows a compositional bias: acidic residues. Positions 124-337 (GELDCGICFE…GGFYACNRYE (214 aa)) are TRIAD supradomain. Residues cysteine 128, cysteine 131, cysteine 145, histidine 147, cysteine 150, cysteine 153, cysteine 173, cysteine 178, cysteine 217, cysteine 222, cysteine 239, cysteine 241, cysteine 246, cysteine 249, histidine 254, cysteine 259, cysteine 286, and cysteine 289 each contribute to the Zn(2+) site. The segment at 128–178 (CGICFETFLSDKLHAAACGHPFCDSCWEGYITTAINDGPGCLTLRCPDPSC) adopts an RING-type 1 zinc-finger fold. An IBR-type zinc finger spans residues 197 to 259 (QKYTSYFVRS…AEEAHRPVDC (63 aa)). An RING-type 2; atypical zinc finger spans residues 286 to 316 (CPKCKRPIEKNQGCMHITCTPPCKFEFCWLC). Cysteine 299 is an active-site residue. Zn(2+)-binding residues include cysteine 304, cysteine 308, cysteine 313, cysteine 316, histidine 323, and cysteine 333. The segment at 514 to 543 (DAYDRTSSSKSLGGKTKGSSSKASSSDSSH) is disordered. Positions 521-542 (SSKSLGGKTKGSSSKASSSDSS) are enriched in low complexity. Residues 540–567 (DSSHWPCEYCTYVNPRSTTICQMCEHGR) form a RanBP2-type zinc finger.

It belongs to the RBR family. Ariadne subfamily. The cofactor is Zn(2+). Ubiquitous.

The enzyme catalyses [E2 ubiquitin-conjugating enzyme]-S-ubiquitinyl-L-cysteine + [acceptor protein]-L-lysine = [E2 ubiquitin-conjugating enzyme]-L-cysteine + [acceptor protein]-N(6)-ubiquitinyl-L-lysine.. Its pathway is protein modification; protein ubiquitination. Its function is as follows. Might act as an E3 ubiquitin-protein ligase, or as part of E3 complex, which accepts ubiquitin from specific E2 ubiquitin-conjugating enzymes and then transfers it to substrates. This Arabidopsis thaliana (Mouse-ear cress) protein is Probable E3 ubiquitin-protein ligase ARI8 (ARI8).